Consider the following 159-residue polypeptide: Large ribosomal subunit protein uL11 (159 aa).

The protein belongs to the universal ribosomal protein uL11 family. Part of the ribosomal stalk of the 50S ribosomal subunit. Interacts with L10 and the large rRNA to form the base of the stalk. L10 forms an elongated spine to which L12 dimers bind in a sequential fashion forming a multimeric L10(L12)X complex.

Forms part of the ribosomal stalk which helps the ribosome interact with GTP-bound translation factors. The polypeptide is Large ribosomal subunit protein uL11 (Methanococcus maripaludis (strain C5 / ATCC BAA-1333)).